The chain runs to 350 residues: Izumo sperm-egg fusion protein 1 (350 aa).

Positions 1–21 are cleaved as a signal peptide; that stretch reads MGPHFTLLCAALAGCLLPAEG. 5 disulfides stabilise this stretch: Cys22–Cys149, Cys25–Cys152, Cys135–Cys159, Cys139–Cys165, and Cys182–Cys233. Residues 22–292 are Extracellular-facing; the sequence is CVICDPSVVL…LQPEKMLASR (271 aa). Residues 148–160 form an important for interaction with IZUMO1R region; sequence WCKNCKKEVHACR. An Ig-like C2-type domain is found at 167-251; it reads ERNVEVPQME…PATIINFHVT (85 aa). N-linked (GlcNAc...) asparagine glycosylation occurs at Asn204. The helical transmembrane segment at 293-313 threads the bilayer; the sequence is LLGLLICGSLALITGLTFAIF. The Cytoplasmic portion of the chain corresponds to 314–350; the sequence is RRRKVIDFIKSSLFGLGSGAAEQTQVPKEKATDSRQQ. Ser325 carries the phosphoserine modification.

Belongs to the Izumo family. In terms of assembly, monomer, homodimer; disulfide-linked and homooligomer; depending on the context. Interacts with IZUMO1R/JUNO. IZUMO1 and IZUMO1R/JUNO form a complex with 1:1 stoichiometry. In gamete recognition, IZUMO1R/JUNO first binds to monomeric IZUMO1. The weak, but specific interaction with IZUMO1R/JUNO induces IZUMO1 homodimerization. The process follows a tight binding phase where IZUMO1 bends the entire structure towards the sperm membrane side through a thiol-disulfide exchange reaction. The molecule no longer binds to IZUMO1R/JUNO and instead binds to a putative second oocyte receptor. Interacts with ACE3. Part of a oolemmal binding multimeric complex (IZUMO1 complex) composed at least of IZUMO1 and GLIPR1L1; the complex assemblage is influenced by the maturation status of the male germ cell. Interacts with GLIPR1L1. Interacts with FREY; the interaction retains IZUMO1 at the endoplasmic reticulum membrane and coordinates IZUMO1 complex assembly. Interacts with FCRL3/MAIA (via extracellular domain); the interaction replaces IZUMO1R/JUNO as IZUMO1 receptor after sperm-egg adhesion. Interacts with WDR54. Forms a complex with SPACA6 and TMEM81 on spermatocyte cell membrane. N-glycosylated. Glycosylation is not essential for fusion and for proper protein trafficking in sperm. Post-translationally, phosphorylated. The cytoplasmic C-terminus is phosphorylated and undergoes phosphorylation changes during epididymal transit. As to expression, sperm-specific (at protein level). Detectable on sperm surface only after the acrosome reaction.

The protein resides in the cell membrane. The protein localises to the cytoplasmic vesicle. It localises to the secretory vesicle. It is found in the acrosome membrane. Its function is as follows. Essential sperm cell-surface protein required for fertilization by acting as a ligand for IZUMO1R/JUNO receptor on egg. The IZUMO1:IZUMO1R/JUNO interaction is a necessary adhesion event between sperm and egg that is required for fertilization but is not sufficient for cell fusion. The ligand-receptor interaction probably does not act as a membrane 'fusogen'. Acts a ligand for the human-specific oolemma epitope FCRL3/MAIA during fertilization. FCRL3/MAIA replaces IZUMO1R/JUNO as IZUMO1 receptor after sperm-egg adhesion, which permits species-specific gamete fusion. Plays a critical role in sperm-oolemma binding prior to plasma membrane fusion. Can mediate cell-cell fusion in cultured mammalian cells independently of its binding to IZUMO1R/JUNO. The protein is Izumo sperm-egg fusion protein 1 of Homo sapiens (Human).